We begin with the raw amino-acid sequence, 471 residues long: Putative multidrug resistance protein MdtD (471 aa).

At 1–11 the chain is on the periplasmic side; it reads MTDLPDSTRWQ. The chain crosses the membrane as a helical span at residues 12–32; sequence LWIVAFGFFMQSLDTTIVNTA. Residues 33–48 are Cytoplasmic-facing; the sequence is LPSMAQSLGESPLHMH. The helical transmembrane segment at 49-69 threads the bilayer; sequence MVIVSYVLTVAVMLPASGWLA. Residues 70–76 lie on the Periplasmic side of the membrane; it reads DKVGVRN. The chain crosses the membrane as a helical span at residues 77 to 97; the sequence is IFFTAIVLFTLGSLFCALSGT. Over 98–101 the chain is Cytoplasmic; that stretch reads LNEL. Residues 102-124 form a helical membrane-spanning segment; that stretch reads LLARALQGVGGAMMVPVGRLTVM. At 125 to 137 the chain is on the periplasmic side; the sequence is KIVPREQYMAAMT. A helical transmembrane segment spans residues 138–158; that stretch reads FVTLPGQIGPLLGPALGGLLV. At 159 to 164 the chain is on the cytoplasmic side; that stretch reads EYASWH. Residues 165–185 traverse the membrane as a helical segment; that stretch reads WIFLINIPVGIIGAITTLMLM. The Periplasmic portion of the chain corresponds to 186-196; the sequence is PNYTMQTRRFD. The chain crosses the membrane as a helical span at residues 197–217; that stretch reads LSGFLLLAVGMAVLTLALDGS. Over 218–224 the chain is Cytoplasmic; it reads KGTGFSP. Residues 225 to 245 traverse the membrane as a helical segment; the sequence is LAIAGLVAVGVVALVLYLLHA. Topologically, residues 246 to 262 are periplasmic; it reads QNNNRALFSLKLFRTRT. Residues 263–283 form a helical membrane-spanning segment; the sequence is FSLGLAGSFAGRIGSGMLPFM. The Cytoplasmic portion of the chain corresponds to 284–285; the sequence is TP. A helical transmembrane segment spans residues 286 to 306; it reads VFLQIGFGFSPFHAGLMMIPM. Residues 307 to 341 are Periplasmic-facing; the sequence is VLGSMGMKRIVVQVVNRFGYRRVLVATTLGLSLVT. Residues 342–362 traverse the membrane as a helical segment; that stretch reads LLFMTTALLGWYYVLPFVLFL. Topologically, residues 363-395 are cytoplasmic; the sequence is QGMVNSTRFSSMNTLTLKDLPDNLASSGNSLLS. Residues 396 to 416 form a helical membrane-spanning segment; sequence MIMQLSMSIGVTIAGLLLGLF. The Periplasmic portion of the chain corresponds to 417–430; sequence GSQHVSVDSGTTQT. Residues 431-451 form a helical membrane-spanning segment; that stretch reads VFMYTWLSMASIIALPAFIFA. Residues 452–471 are Cytoplasmic-facing; it reads RVPNDTHQNVAISRRKRSAQ.

The protein belongs to the major facilitator superfamily. TCR/Tet family.

The protein localises to the cell inner membrane. The protein is Putative multidrug resistance protein MdtD of Escherichia coli O6:H1 (strain CFT073 / ATCC 700928 / UPEC).